The sequence spans 89 residues: Small ribosomal subunit protein uS19 (89 aa).

Belongs to the universal ribosomal protein uS19 family.

Protein S19 forms a complex with S13 that binds strongly to the 16S ribosomal RNA. The chain is Small ribosomal subunit protein uS19 from Phocaeicola vulgatus (strain ATCC 8482 / DSM 1447 / JCM 5826 / CCUG 4940 / NBRC 14291 / NCTC 11154) (Bacteroides vulgatus).